The sequence spans 156 residues: Ribonuclease pancreatic (156 aa).

An N-terminal signal peptide occupies residues 1–28 (MALEKSLVLLPLLVLALLVLGWIQPSLG). Substrate-binding residues include K35 and R38. H40 (proton acceptor) is an active-site residue. 4 disulfides stabilise this stretch: C54/C112, C68/C123, C86/C138, and C93/C100. A glycan (N-linked (GlcNAc...) asparagine) is linked at N62. Residue 69 to 73 (KPVNT) coordinates substrate. The N-linked (GlcNAc...) asparagine glycan is linked to N90. K94 lines the substrate pocket. N104 is a glycosylation site (N-linked (GlcNAc...) asparagine). Position 113 (R113) interacts with substrate. Residue H147 is the Proton donor of the active site.

This sequence belongs to the pancreatic ribonuclease family. As to quaternary structure, monomer. Interacts with and forms tight 1:1 complexes with RNH1. Dimerization of two such complexes may occur. Interaction with RNH1 inhibits this protein.

It localises to the secreted. It catalyses the reaction an [RNA] containing cytidine + H2O = an [RNA]-3'-cytidine-3'-phosphate + a 5'-hydroxy-ribonucleotide-3'-[RNA].. It carries out the reaction an [RNA] containing uridine + H2O = an [RNA]-3'-uridine-3'-phosphate + a 5'-hydroxy-ribonucleotide-3'-[RNA].. Functionally, endonuclease that catalyzes the cleavage of RNA on the 3' side of pyrimidine nucleotides. Acts on single-stranded and double-stranded RNA. The protein is Ribonuclease pancreatic (RNASE1) of Lemur catta (Ring-tailed lemur).